Reading from the N-terminus, the 482-residue chain is ATP synthase subunit beta (482 aa).

ATP is bound at residue 161–168; the sequence is GGAGVGKT.

It belongs to the ATPase alpha/beta chains family. F-type ATPases have 2 components, CF(1) - the catalytic core - and CF(0) - the membrane proton channel. CF(1) has five subunits: alpha(3), beta(3), gamma(1), delta(1), epsilon(1). CF(0) has three main subunits: a(1), b(2) and c(9-12). The alpha and beta chains form an alternating ring which encloses part of the gamma chain. CF(1) is attached to CF(0) by a central stalk formed by the gamma and epsilon chains, while a peripheral stalk is formed by the delta and b chains.

Its subcellular location is the cell inner membrane. The catalysed reaction is ATP + H2O + 4 H(+)(in) = ADP + phosphate + 5 H(+)(out). Produces ATP from ADP in the presence of a proton gradient across the membrane. The catalytic sites are hosted primarily by the beta subunits. In Solibacter usitatus (strain Ellin6076), this protein is ATP synthase subunit beta.